The following is a 101-amino-acid chain: Translation initiation factor IF-1, chloroplastic (101 aa).

Positions 1–10 (MNQLKKSFSP) are enriched in polar residues. The segment at 1-35 (MNQLKKSFSPTEGKKDQNNLINDPQKNKQKKQKKL) is disordered. The region spanning 26 to 101 (KNKQKKQKKL…TKGRITYRHR (76 aa)) is the S1-like domain.

This sequence belongs to the IF-1 family. As to quaternary structure, component of the 30S ribosomal translation pre-initiation complex which assembles on the 30S ribosome in the order IF-2 and IF-3, IF-1 and N-formylmethionyl-tRNA(fMet); mRNA recruitment can occur at any time during PIC assembly.

The protein resides in the plastid. It localises to the chloroplast. In terms of biological role, one of the essential components for the initiation of protein synthesis. Stabilizes the binding of IF-2 and IF-3 on the 30S subunit to which N-formylmethionyl-tRNA(fMet) subsequently binds. Helps modulate mRNA selection, yielding the 30S pre-initiation complex (PIC). Upon addition of the 50S ribosomal subunit IF-1, IF-2 and IF-3 are released leaving the mature 70S translation initiation complex. The polypeptide is Translation initiation factor IF-1, chloroplastic (Tetradesmus obliquus (Green alga)).